The following is a 557-amino-acid chain: MAPSNIVVQSSSTPPVAGGDEEFAPSVWGDFFVTYATPVSQASEQRMSERAELLKAQVRQAFDAASMDVAGLITYVDTLERLGLDNHFRDLIGAALERIGAEELPEHGGGLHIVALRFRLLRQHGIWVSTDVFDAFREDAGGFCSSLCSDDPRGLLSLYNAAHMAVPGEVVLDDAIAFARGRLLDIISKGEVRSPVSEQITRALDIPLPRFTRRLETMHYIAEYEHEEAHDGLLLELARLNFVLVRALHLRELKDLSLWWRELYNTVKLPYARDRMVEIYFWTCGMLHEEEYSLARMFFAKTFGMVSLMDDTFDVHATLDECHKLKEAMQRWDESEVSILPEYLRLLYIKTLSNFKEFEEILEPNKKYRMAYTKEAYKLCSKNYLKEAIWSNQKYQPSFKEHEELSIMTSGLPMLTILTLMGFGDEATPEAFEWVSSVPEMVRAGSQVTRFLNDLSSYKLGKNKKDMPGSVETYMVENGLTGDEAAAAIAALLENRWRILNQTRMEIDHTLLPAAQVVLNMARANEIIYLHGRDAYTFGADLKDLVTTLFLKQVLPL.

Residues Asp310 and Asp314 each coordinate Mg(2+). Substrate is bound by residues Asp310, Asp314, Arg450, and Asn453. Positions 310–314 match the DDXXD motif motif; it reads DDTFD. 2 residues coordinate Mg(2+): Asn453 and Ser457.

Belongs to the terpene synthase family. As to quaternary structure, monomer. Requires Mg(2+) as cofactor. Mn(2+) serves as cofactor. In terms of tissue distribution, specifically expressed in roots.

Its subcellular location is the cytoplasm. The catalysed reaction is (2E,6E)-farnesyl diphosphate + 2 H2O = 7-epi-ent-eudesmane-5,11-diol + diphosphate. It participates in secondary metabolite biosynthesis; terpenoid biosynthesis. In terms of biological role, component of the volatile terpenes biosynthesis pathways. Dihydroxylated sesquiterpenoid synthase that generates dually hydroxylated products directly from (E,E)-farnesyl diphosphate, primarily eudesmane-2,11-diol, along with two closely related structural isomers. This Zea mays (Maize) protein is Eudesmanediol synthase.